Reading from the N-terminus, the 113-residue chain is Hydrogenase maturation factor HypA (113 aa).

Ni(2+) is bound at residue His2. Cys73, Cys76, Cys89, and Cys92 together coordinate Zn(2+).

It belongs to the HypA/HybF family.

Involved in the maturation of [NiFe] hydrogenases. Required for nickel insertion into the metal center of the hydrogenase. The chain is Hydrogenase maturation factor HypA from Azorhizobium caulinodans (strain ATCC 43989 / DSM 5975 / JCM 20966 / LMG 6465 / NBRC 14845 / NCIMB 13405 / ORS 571).